The primary structure comprises 283 residues: CDP-abequose synthase (283 aa).

NAD(+) is bound by residues 7–13 (GGSGYIG), 48–49 (EF), tyrosine 129, and lysine 133. The Proton acceptor role is filled by tyrosine 129.

Belongs to the NAD(P)-dependent epimerase/dehydratase family.

The enzyme catalyses CDP-alpha-D-abequose + NADP(+) = CDP-4-dehydro-3,6-dideoxy-alpha-D-glucose + NADPH + H(+). Its pathway is bacterial outer membrane biogenesis; LPS O-antigen biosynthesis. Functionally, the CDP-abequose synthase is involved in lipopolysaccharides (LPS) synthesis containing abequose which are important antigens of the cell surface responsible for the serological O specificity. Derivatives of the 3,6-dideoxyhexose group have a particular highly immunogenic character. In Yersinia pseudotuberculosis, this protein is CDP-abequose synthase (rfbJ).